A 324-amino-acid chain; its full sequence is MKPSIILYKTLPDDLLHRLEAHFTVTQVPNLHPETVARHAQAFASAQGLLGASETVNRALLEKMPALRAASTISVGYDNVEVDALTARKIVLMHTPTVLTETVADTVMALMLATARRVVDVAERVKAGEWTESIGPAWFGVDVHHKTLGIVGMGRIGMALAQRAHFGFTMPVLYHARRRHQEAEDRFNARYCDLDTLLQEADFVCVILPLTAETRHLFGATQFARMKSSAIFINAGRGPVVDENALIAALQNGEIYAAGLDVFEQEPLSVDSPLLNMSNVVAVPHIGSATHETRYNMMACAVDNLIDALQGKIEKNCVNPQAAG.

Catalysis depends on residues Arg237 and Glu266. The Proton donor role is filled by His285.

It belongs to the D-isomer specific 2-hydroxyacid dehydrogenase family. GhrB subfamily. As to quaternary structure, homodimer.

It is found in the cytoplasm. The enzyme catalyses glycolate + NADP(+) = glyoxylate + NADPH + H(+). It carries out the reaction (R)-glycerate + NAD(+) = 3-hydroxypyruvate + NADH + H(+). It catalyses the reaction (R)-glycerate + NADP(+) = 3-hydroxypyruvate + NADPH + H(+). Its function is as follows. Catalyzes the NADPH-dependent reduction of glyoxylate and hydroxypyruvate into glycolate and glycerate, respectively. The protein is Glyoxylate/hydroxypyruvate reductase B of Salmonella choleraesuis (strain SC-B67).